Consider the following 708-residue polypeptide: Ribosomal RNA large subunit methyltransferase K/L (708 aa).

Residues 43–154 (QIYRCCLWSR…KENALLGIDM (112 aa)) form the THUMP domain.

Belongs to the methyltransferase superfamily. RlmKL family.

Its subcellular location is the cytoplasm. It catalyses the reaction guanosine(2445) in 23S rRNA + S-adenosyl-L-methionine = N(2)-methylguanosine(2445) in 23S rRNA + S-adenosyl-L-homocysteine + H(+). The enzyme catalyses guanosine(2069) in 23S rRNA + S-adenosyl-L-methionine = N(2)-methylguanosine(2069) in 23S rRNA + S-adenosyl-L-homocysteine + H(+). Its function is as follows. Specifically methylates the guanine in position 2445 (m2G2445) and the guanine in position 2069 (m7G2069) of 23S rRNA. The chain is Ribosomal RNA large subunit methyltransferase K/L from Vibrio cholerae serotype O1 (strain ATCC 39541 / Classical Ogawa 395 / O395).